The following is a 404-amino-acid chain: GID complex subunit 9 (404 aa).

In terms of domain architecture, LisH spans 116–148 (SRVRLNRLVADYMMANGYHGAAALLCKDSQLEN). Residues 154-211 (IYKRYQLIHDSILQQELKEVLSWCSEHRAILKKNNSTLELEVRLQRFIELIKSKKLCQ) form the CTLH domain. The RING-Gid-type zinc-finger motif lies at 317-389 (CPVCTPCLND…REGFLRDPYS (73 aa)).

Belongs to the FYV10 family. Identified in the GID/CTLH complex. In the absence of stress, the complex exists as an inactive anticipatory complex (GID(Ant)), composed of Gid1, the E3 ubiquitin-ligase Gid2, Gid5, Gid8, and the RING-like subunit Gid9, awaiting a substrate receptor to form the active E3 ligase complex. When cells are shifted to glucose-containing medium, the substrate receptor Gid4 is induced and becomes part of the complex, named GID(SR4). Additionally, Gid7 transforms the GID(SR4) E3 ligase core into a higher-order supramolecular assembly (Chelator-GID(SR4)). Under osmotic or heat stress, the substrate receptor Gid10 is induced and becomes part of the complex, named GID(SR10).

Its subcellular location is the cytoplasm. The protein localises to the nucleus. It carries out the reaction S-ubiquitinyl-[E2 ubiquitin-conjugating enzyme]-L-cysteine + [acceptor protein]-L-lysine = [E2 ubiquitin-conjugating enzyme]-L-cysteine + N(6)-ubiquitinyl-[acceptor protein]-L-lysine.. It functions in the pathway protein modification; protein ubiquitination. Its function is as follows. Component of the GID E3 ligase complex recruiting N termini and catalyzing ubiquitination of proteins targeted for degradation. GID E3 is regulated through assembly with interchangeable N-degron-binding substrate receptors induced by distinct environmental perturbations. Required for the adaptation to the presence of glucose in the growth medium; mediates in association with the substrate receptor VID24/GID4 the degradation of enzymes involved in gluconeogenesis when cells are shifted to glucose-containing medium. The sequence is that of GID complex subunit 9 (gid9) from Schizosaccharomyces pombe (strain 972 / ATCC 24843) (Fission yeast).